Consider the following 371-residue polypeptide: Cytochrome b (371 aa).

Helical transmembrane passes span 25–45 (FGSM…FLSM), 69–90 (WMMQ…YMHI), 105–125 (WLSG…GYVL), and 170–190 (FFAL…VHIM). The heme b site is built by His-75 and His-89. His-174 and His-188 together coordinate heme b. His-193 lines the a ubiquinone pocket. 4 helical membrane passes run 218–238 (YKDL…VSFF), 280–300 (LGGA…PFTH), 312–332 (LMQF…WTAT), and 339–358 (FTTI…MSNP).

It belongs to the cytochrome b family. The cytochrome bc1 complex contains 3 respiratory subunits (MT-CYB, CYC1 and UQCRFS1), 2 core proteins (UQCRC1 and UQCRC2) and probably 6 low-molecular weight proteins. Heme b is required as a cofactor.

The protein resides in the mitochondrion inner membrane. Functionally, component of the ubiquinol-cytochrome c reductase complex (complex III or cytochrome b-c1 complex) that is part of the mitochondrial respiratory chain. The b-c1 complex mediates electron transfer from ubiquinol to cytochrome c. Contributes to the generation of a proton gradient across the mitochondrial membrane that is then used for ATP synthesis. The sequence is that of Cytochrome b (MT-CYB) from Candoia carinata (Papuan tree boa).